The chain runs to 152 residues: Diamine acetyltransferase (152 aa).

Residues 5–152 (FEVRKATIDD…SFLDLTPKSD (148 aa)) enclose the N-acetyltransferase domain. The active-site Proton donor is the Y127.

Belongs to the acetyltransferase family. As to quaternary structure, homotetramer.

The protein resides in the cytoplasm. The catalysed reaction is an alkane-alpha,omega-diamine + acetyl-CoA = an N-acetylalkane-alpha,omega-diamine + CoA + H(+). The protein operates within amine and polyamine degradation; putrescine degradation; N-acetylputrescine from putrescine: step 1/1. Enzyme which catalyzes the acetylation of polyamines. Displays higher substrate specificity for spermine than for spermidine. May function to acetylate host-derived polyamines, thus alleviating the necessity for de novo synthesis of these molecules. The protein is Diamine acetyltransferase of Cryptosporidium parvum (strain Iowa II).